We begin with the raw amino-acid sequence, 554 residues long: (E)-nerolidol synthase TPS18VF (554 aa).

5 residues coordinate (2E,6E)-farnesyl diphosphate: Arg276, Asp313, Asp317, Arg455, and Asp458. 2 residues coordinate Mg(2+): Asp313 and Asp317. A DDXXD motif motif is present at residues 313–317 (DDIFD). The Mg(2+) site is built by Asp458, Ser462, and Glu466.

Belongs to the terpene synthase family. Tpsb subfamily. The cofactor is Mg(2+). Requires Mn(2+) as cofactor. Highly expressed in glandular trichomes.

It carries out the reaction (2E,6E)-farnesyl diphosphate + H2O = (6E)-nerolidol + diphosphate. It catalyses the reaction (2E)-geranyl diphosphate + H2O = (S)-linalool + diphosphate. It functions in the pathway secondary metabolite biosynthesis; terpenoid biosynthesis. In terms of biological role, involved in sesquiterpene olefins biosynthesis, constituants of cannabinoids and terpenoids-rich resins. Catalyzes primarily the conversion of (2E)-farnesyl diphosphate to (E)-nerolidol, and the conversion of (2E)-geranyl diphosphate to (+)linalool. This Cannabis sativa (Hemp) protein is (E)-nerolidol synthase TPS18VF.